Consider the following 199-residue polypeptide: Histone deacetylase complex subunit SAP25 (199 aa).

Composition is skewed to polar residues over residues 151-163 (QMSQ…SSSA) and 184-199 (QGAD…THCP). Positions 151–199 (QMSQGEPRPSSSAVGPPDHTSDPPSPCGSPSSSQGADLSLPQTPDTHCP) are disordered.

May be a component of the mSIN3A corepressor complex. Interacts with SIN3A. Interacts with HDAC2.

The protein localises to the nucleus. It is found in the cytoplasm. Its function is as follows. Involved in the transcriptional repression mediated by the mSIN3A but not the N-CoR corepressor complex. This is Histone deacetylase complex subunit SAP25 (SAP25) from Homo sapiens (Human).